A 477-amino-acid polypeptide reads, in one-letter code: Bifunctional protein HldE (477 aa).

Residues 1–319 (MKITLPPFDQ…RALQEQEQSG (319 aa)) are ribokinase. 195–198 (NLAE) lines the ATP pocket. Residue Asp264 is part of the active site. The segment at 344-477 (MTNGCFDLLH…IERMQSAPDT (134 aa)) is cytidylyltransferase.

It in the N-terminal section; belongs to the carbohydrate kinase PfkB family. The protein in the C-terminal section; belongs to the cytidylyltransferase family. In terms of assembly, homodimer.

The catalysed reaction is D-glycero-beta-D-manno-heptose 7-phosphate + ATP = D-glycero-beta-D-manno-heptose 1,7-bisphosphate + ADP + H(+). It catalyses the reaction D-glycero-beta-D-manno-heptose 1-phosphate + ATP + H(+) = ADP-D-glycero-beta-D-manno-heptose + diphosphate. It functions in the pathway nucleotide-sugar biosynthesis; ADP-L-glycero-beta-D-manno-heptose biosynthesis; ADP-L-glycero-beta-D-manno-heptose from D-glycero-beta-D-manno-heptose 7-phosphate: step 1/4. The protein operates within nucleotide-sugar biosynthesis; ADP-L-glycero-beta-D-manno-heptose biosynthesis; ADP-L-glycero-beta-D-manno-heptose from D-glycero-beta-D-manno-heptose 7-phosphate: step 3/4. In terms of biological role, catalyzes the phosphorylation of D-glycero-D-manno-heptose 7-phosphate at the C-1 position to selectively form D-glycero-beta-D-manno-heptose-1,7-bisphosphate. Its function is as follows. Catalyzes the ADP transfer from ATP to D-glycero-beta-D-manno-heptose 1-phosphate, yielding ADP-D-glycero-beta-D-manno-heptose. The protein is Bifunctional protein HldE of Alkalilimnicola ehrlichii (strain ATCC BAA-1101 / DSM 17681 / MLHE-1).